The primary structure comprises 96 residues: Putative pterin-4-alpha-carbinolamine dehydratase (96 aa).

It belongs to the pterin-4-alpha-carbinolamine dehydratase family.

The catalysed reaction is (4aS,6R)-4a-hydroxy-L-erythro-5,6,7,8-tetrahydrobiopterin = (6R)-L-erythro-6,7-dihydrobiopterin + H2O. The protein is Putative pterin-4-alpha-carbinolamine dehydratase of Caulobacter sp. (strain K31).